Here is a 116-residue protein sequence, read N- to C-terminus: Large ribosomal subunit protein eL22B (116 aa).

It belongs to the eukaryotic ribosomal protein eL22 family.

This is Large ribosomal subunit protein eL22B (rpl22a) from Dictyostelium discoideum (Social amoeba).